Consider the following 277-residue polypeptide: Adenylate kinase (277 aa).

53–58 (GAGKGT) is a binding site for ATP. The NMP stretch occupies residues 73–102 (ATGDMLRAQVAAKTPLGREAKKIMDAGGLV). Residues Thr74, Arg79, 100–102 (GLV), 129–132 (GFPR), and Gln136 contribute to the AMP site. Positions 170-207 (GRLVHPASGRSYHKIFNPPKAPMTDDATGEPLIQRSDD) are LID. ATP is bound by residues Arg171 and 180-181 (SY). 2 residues coordinate AMP: Arg204 and Arg215. Gln243 is an ATP binding site.

This sequence belongs to the adenylate kinase family. AK2 subfamily. As to quaternary structure, monomer.

It localises to the cytoplasm. The protein resides in the cytosol. Its subcellular location is the mitochondrion intermembrane space. It carries out the reaction AMP + ATP = 2 ADP. In terms of biological role, catalyzes the reversible transfer of the terminal phosphate group between ATP and AMP. Plays an important role in cellular energy homeostasis and in adenine nucleotide metabolism. Adenylate kinase activity is critical for regulation of the phosphate utilization and the AMP de novo biosynthesis pathways. This Phaeosphaeria nodorum (strain SN15 / ATCC MYA-4574 / FGSC 10173) (Glume blotch fungus) protein is Adenylate kinase.